Reading from the N-terminus, the 831-residue chain is MLTIQFLCPLPNGLHARPAWELKEQCSQWQSEITFINHRQNAKADAKSSLALIGTGTLFNDSCSLNISGSDEEQARRVLEEYIQVRFIDSDSVQPTQAELTAHPLPRSLSRLNPDLLYGNVLASGVGVGTLTLLQSDSLDSYRAIPASAQDSTRLEHSLATLAEQLNQQLRERDGESKTILSAHLSLIQDDEFAGNIRRLMTEQHQGLGAAIIRNMEQVCAKLSASASDYLRERVSDIRDISEQLLHITWPELKPRNNLVLEKPTILVAEDLTPSQFLSLDLKNLAGMILEKTGRTSHTLILARASAIPVLSGLPLDAIARYAGQPAVLDAQCGVLAINPNDAVSGYYQVAQTLADKRQKQQAQAAAQLAYSRDNKRIDIAANIGTALEAPGAFANGAEGVGLFRTEMLYMDRDSEPDEQEQFEAYQQVLLAAGDKPIIFRTMDIGGDKSIPYLNIPQEENPFLGYRAVRIYPEFAGLFRTQLRAILRAASFGNAQLMIPMVHGLDQILWVKGEIQKAIVELKRDGLRHAETITLGIMVEVPSVCYIIDHFCDEVDFFSIGSNDMTQYLYAVDRNNPRVSPLYNPITPSFLRMLQQIVTTAHQRGKWVGICGELGGESRYLPLLLGLGLDELSMSSPRIPAVKSQLRQLDSEACRELARQACECRSAQEIEALLTAFTPEEDVRPLLALENIFVDQAFSNKEQAIQFLCGNLGVNGRTEHPFELEEDVWQREEIVTTGVGFGVAIPHTKSQWIRHSSISIARLAKPVDWQSEMGEVELVIMLTLGANEGMNHVKVFSQLARKLVNKNFRQSLFAAQDAQSILTLLETELTF.

The HPr domain occupies 1–90 (MLTIQFLCPL…EYIQVRFIDS (90 aa)). His15 (pros-phosphohistidine intermediate; for HPr activity) is an active-site residue. His15 is modified (phosphohistidine; by EI). Residues 119–650 (GNVLASGVGV…AVKSQLRQLD (532 aa)) form a PTS EI region. His298 serves as the catalytic Tele-phosphohistidine intermediate; for PTS EI activity. His298 is subject to Phosphohistidine; by autocatalysis. Residues Arg405 and Arg441 each contribute to the phosphoenolpyruvate site. 2 residues coordinate Mg(2+): Glu540 and Asp564. Phosphoenolpyruvate contacts are provided by residues 563-564 (ND) and Arg574. The Proton donor; for EI activity role is filled by Cys611. Positions 685–828 (PLLALENIFV…QSILTLLETE (144 aa)) constitute a PTS EIIA type-2 domain. His747 functions as the Tele-phosphohistidine intermediate; for PTS EIIA activity in the catalytic mechanism. Position 747 is a phosphohistidine; by HPr (His747).

The protein belongs to the PEP-utilizing enzyme family. It depends on Mg(2+) as a cofactor.

It localises to the cytoplasm. The catalysed reaction is L-histidyl-[protein] + phosphoenolpyruvate = N(pros)-phospho-L-histidyl-[protein] + pyruvate. The enzyme catalyses D-fructose(out) + N(pros)-phospho-L-histidyl-[protein] = D-fructose 1-phosphate(in) + L-histidyl-[protein]. Functionally, multifunctional protein that includes general (non sugar-specific) and sugar-specific components of the phosphoenolpyruvate-dependent sugar phosphotransferase system (sugar PTS). This major carbohydrate active transport system catalyzes the phosphorylation of incoming sugar substrates concomitantly with their translocation across the cell membrane. The enzyme II FryABC PTS system is involved in fructose transport. The protein is Multiphosphoryl transfer protein (fryA) of Escherichia coli O157:H7.